The sequence spans 979 residues: DNA ligase 4 (979 aa).

Residues 1 to 39 (MDSDEIMPDEEHPNVPVGDEESDIDEKYPNRPRNHSPTL) form a disordered region. ATP-binding residues include Glu320, Lys322, Leu323, Arg327, Glu389, Phe430, Glu490, Lys495, Lys512, and Lys514. Lys322 acts as the N6-AMP-lysine intermediate in catalysis. Glu389 contacts Mg(2+). Residue Glu490 coordinates Mg(2+). BRCT domains follow at residues 721–814 (PSGH…PDFL) and 867–965 (LQES…RFQP).

Belongs to the ATP-dependent DNA ligase family. It depends on Mg(2+) as a cofactor.

Its subcellular location is the nucleus. The catalysed reaction is ATP + (deoxyribonucleotide)n-3'-hydroxyl + 5'-phospho-(deoxyribonucleotide)m = (deoxyribonucleotide)n+m + AMP + diphosphate.. DNA ligase involved in DNA non-homologous end joining (NHEJ); required for double-strand break (DSB) repair. The sequence is that of DNA ligase 4 (lig4) from Aspergillus fumigatus (strain ATCC MYA-4609 / CBS 101355 / FGSC A1100 / Af293) (Neosartorya fumigata).